The primary structure comprises 156 residues: D-aminoacyl-tRNA deacylase (156 aa).

Positions Gly142–Pro143 match the Gly-cisPro motif, important for rejection of L-amino acids motif.

It belongs to the DTD family. As to quaternary structure, homodimer.

It is found in the cytoplasm. The enzyme catalyses glycyl-tRNA(Ala) + H2O = tRNA(Ala) + glycine + H(+). It carries out the reaction a D-aminoacyl-tRNA + H2O = a tRNA + a D-alpha-amino acid + H(+). In terms of biological role, an aminoacyl-tRNA editing enzyme that deacylates mischarged D-aminoacyl-tRNAs. Also deacylates mischarged glycyl-tRNA(Ala), protecting cells against glycine mischarging by AlaRS. Acts via tRNA-based rather than protein-based catalysis; rejects L-amino acids rather than detecting D-amino acids in the active site. By recycling D-aminoacyl-tRNA to D-amino acids and free tRNA molecules, this enzyme counteracts the toxicity associated with the formation of D-aminoacyl-tRNA entities in vivo and helps enforce protein L-homochirality. The sequence is that of D-aminoacyl-tRNA deacylase from Cupriavidus metallidurans (strain ATCC 43123 / DSM 2839 / NBRC 102507 / CH34) (Ralstonia metallidurans).